Reading from the N-terminus, the 203-residue chain is Pyridoxal 5'-phosphate synthase subunit PdxT (203 aa).

54–56 (GES) lines the L-glutamine pocket. The active-site Nucleophile is Cys-86. L-glutamine contacts are provided by residues Arg-113 and 141 to 142 (IR). Active-site charge relay system residues include His-177 and Glu-179.

This sequence belongs to the glutaminase PdxT/SNO family. In terms of assembly, in the presence of PdxS, forms a dodecamer of heterodimers. Only shows activity in the heterodimer.

The enzyme catalyses aldehydo-D-ribose 5-phosphate + D-glyceraldehyde 3-phosphate + L-glutamine = pyridoxal 5'-phosphate + L-glutamate + phosphate + 3 H2O + H(+). The catalysed reaction is L-glutamine + H2O = L-glutamate + NH4(+). It functions in the pathway cofactor biosynthesis; pyridoxal 5'-phosphate biosynthesis. In terms of biological role, catalyzes the hydrolysis of glutamine to glutamate and ammonia as part of the biosynthesis of pyridoxal 5'-phosphate. The resulting ammonia molecule is channeled to the active site of PdxS. This Halobacterium salinarum (strain ATCC 29341 / DSM 671 / R1) protein is Pyridoxal 5'-phosphate synthase subunit PdxT.